We begin with the raw amino-acid sequence, 339 residues long: tRNA dimethylallyltransferase (339 aa).

36–43 serves as a coordination point for ATP; it reads GPTGSGKT. 38–43 contributes to the substrate binding site; it reads TGSGKT. The tract at residues 61-64 is interaction with substrate tRNA; that stretch reads DSMQ.

Belongs to the IPP transferase family. Monomer. Requires Mg(2+) as cofactor.

The catalysed reaction is adenosine(37) in tRNA + dimethylallyl diphosphate = N(6)-dimethylallyladenosine(37) in tRNA + diphosphate. Functionally, catalyzes the transfer of a dimethylallyl group onto the adenine at position 37 in tRNAs that read codons beginning with uridine, leading to the formation of N6-(dimethylallyl)adenosine (i(6)A). The protein is tRNA dimethylallyltransferase of Chlamydia trachomatis serovar L2 (strain ATCC VR-902B / DSM 19102 / 434/Bu).